A 462-amino-acid polypeptide reads, in one-letter code: Dipeptidyl peptidase 1 (462 aa).

Positions methionine 1–serine 24 are cleaved as a signal peptide. Residues asparagine 29 and asparagine 53 are each glycosylated (N-linked (GlcNAc...) asparagine). 2 disulfide bridges follow: cysteine 30-cysteine 118 and cysteine 54-cysteine 136. Residues alanine 135–serine 229 constitute a propeptide that is removed on maturation. Residue asparagine 144 is glycosylated (N-linked (GlcNAc...) asparagine). 3 disulfide bridges follow: cysteine 254–cysteine 297, cysteine 290–cysteine 330, and cysteine 320–cysteine 336. Residue cysteine 257 is part of the active site. N-linked (GlcNAc...) asparagine glycosylation occurs at asparagine 275. Phenylalanine 301 and tyrosine 303 together coordinate chloride. Tyrosine 346 contributes to the chloride binding site. Active-site residues include histidine 404 and asparagine 426.

This sequence belongs to the peptidase C1 family. Tetramer of heterotrimers consisting of exclusion domain, heavy- and light chains. The cofactor is chloride. In terms of tissue distribution, broadly distributed, but higher levels found in liver, spleen, intestine, lung and kidney.

The protein resides in the lysosome. It carries out the reaction Release of an N-terminal dipeptide, Xaa-Yaa-|-Zaa-, except when Xaa is Arg or Lys, or Yaa or Zaa is Pro.. Functionally, thiol protease. Has dipeptidylpeptidase activity. Active against a broad range of dipeptide substrates composed of both polar and hydrophobic amino acids. Proline cannot occupy the P1 position and arginine cannot occupy the P2 position of the substrate. Can act as both an exopeptidase and endopeptidase. Activates serine proteases such as elastase, cathepsin G and granzymes A and B. In Rattus norvegicus (Rat), this protein is Dipeptidyl peptidase 1 (Ctsc).